A 261-amino-acid polypeptide reads, in one-letter code: MNKFLIIDGLNLVRRIYAAIPDENDMESLTERVSVACTKLLRIHHPTHVAVVWDGDEISWRKQLYPDYKKGRKPMPEPLAAGLIALQEHLQNLQIQSIYAAAEADDVIATLATKTAKAQGEALIVSTDKGFSQLNHPRISQWDHFNQQYLNIAELEQKLGVDRSQFLDLMALAGDSGNKIPGIPGIGPKSAAELLRTFRTLATLFSSLPNLGAKQAKKLAEGRDMARLSYKLVQLQTDLPLNINLRDFRVNSPTKASSNNL.

D105 is a Mg(2+) binding site. The region spanning 164-256 (SQFLDLMALA…DFRVNSPTKA (93 aa)) is the 5'-3' exonuclease domain. K(+) contacts are provided by L172, A173, P181, I183, and I186. Residues 185–190 (GIGPKS) are interaction with DNA.

The protein belongs to the Xni family. The cofactor is Mg(2+). It depends on K(+) as a cofactor.

In terms of biological role, has flap endonuclease activity. During DNA replication, flap endonucleases cleave the 5'-overhanging flap structure that is generated by displacement synthesis when DNA polymerase encounters the 5'-end of a downstream Okazaki fragment. The sequence is that of Flap endonuclease Xni from Shewanella oneidensis (strain ATCC 700550 / JCM 31522 / CIP 106686 / LMG 19005 / NCIMB 14063 / MR-1).